A 428-amino-acid polypeptide reads, in one-letter code: GTPase Obg (428 aa).

In terms of domain architecture, Obg spans 1-158 (MFVDQVQVEV…RFIKLELKVL (158 aa)). Residues 159 to 333 (ADVGLVGFPS…LMHKTAEVLK (175 aa)) enclose the OBG-type G domain. Residues 165-172 (GFPSVGKS), 190-194 (FTTLV), 212-215 (DLPG), 282-285 (TKMD), and 314-316 (SSL) each bind GTP. 2 residues coordinate Mg(2+): Ser-172 and Thr-192. In terms of domain architecture, OCT spans 350–428 (YKYQPEPALK…IDDFTFEFVE (79 aa)).

It belongs to the TRAFAC class OBG-HflX-like GTPase superfamily. OBG GTPase family. In terms of assembly, monomer. It depends on Mg(2+) as a cofactor.

The protein resides in the cytoplasm. Functionally, an essential GTPase which binds GTP, GDP and possibly (p)ppGpp with moderate affinity, with high nucleotide exchange rates and a fairly low GTP hydrolysis rate. Plays a role in control of the cell cycle, stress response, ribosome biogenesis and in those bacteria that undergo differentiation, in morphogenesis control. The chain is GTPase Obg from Lacticaseibacillus paracasei (strain ATCC 334 / BCRC 17002 / CCUG 31169 / CIP 107868 / KCTC 3260 / NRRL B-441) (Lactobacillus paracasei).